The sequence spans 248 residues: Coenzyme F420:L-glutamate ligase (248 aa).

GTP contacts are provided by residues Ile-15–Ile-18, Glu-45–Thr-46, and Lys-50. Asp-115 contributes to the a divalent metal cation binding site. A GTP-binding site is contributed by Asn-118. 3 residues coordinate a divalent metal cation: Asp-155, Ser-156, and Gln-213. GTP is bound at residue Met-211–Ile-218.

This sequence belongs to the CofE family. As to quaternary structure, homodimer. The cofactor is Mg(2+). It depends on Mn(2+) as a cofactor. K(+) serves as cofactor.

It carries out the reaction oxidized coenzyme F420-0 + GTP + L-glutamate = oxidized coenzyme F420-1 + GDP + phosphate + H(+). It catalyses the reaction oxidized coenzyme F420-1 + GTP + L-glutamate = oxidized coenzyme F420-2 + GDP + phosphate + H(+). It participates in cofactor biosynthesis; coenzyme F420 biosynthesis. Functionally, catalyzes the GTP-dependent successive addition of two or more gamma-linked L-glutamates to the L-lactyl phosphodiester of 7,8-didemethyl-8-hydroxy-5-deazariboflavin (F420-0) to form coenzyme F420-0-glutamyl-glutamate (F420-2) or polyglutamated F420 derivatives. The chain is Coenzyme F420:L-glutamate ligase from Methanococcus maripaludis (strain DSM 14266 / JCM 13030 / NBRC 101832 / S2 / LL).